The primary structure comprises 429 residues: 28S rRNA (cytosine-C(5))-methyltransferase (429 aa).

N-acetylglycine is present on glycine 2. Phosphoserine is present on serine 167. S-adenosyl-L-methionine contacts are provided by residues cysteine 234–lysine 240, aspartate 258, arginine 263, and aspartate 305. Cysteine 359 functions as the Nucleophile in the catalytic mechanism.

Belongs to the class I-like SAM-binding methyltransferase superfamily. RsmB/NOP family. As to expression, ubiquitous. Detected in placenta, heart and skeletal muscle.

It is found in the nucleus. Its subcellular location is the nucleolus. The catalysed reaction is cytidine(3782) in 28S rRNA + S-adenosyl-L-methionine = 5-methylcytidine(3782) in 28S rRNA + S-adenosyl-L-homocysteine + H(+). In terms of biological role, S-adenosyl-L-methionine-dependent methyltransferase that specifically methylates the C(5) position of cytosine 3782 (m5C3782) in 28S rRNA. m5C3782 promotes protein translation without affecting ribosome biogenesis and fidelity. Required for corpus callosum and cerebral cortex development. The chain is 28S rRNA (cytosine-C(5))-methyltransferase from Homo sapiens (Human).